We begin with the raw amino-acid sequence, 472 residues long: Transmembrane protein 8B (472 aa).

Residues 1 to 10 (MNMPQSLGTQ) are compositionally biased toward low complexity. The tract at residues 1–24 (MNMPQSLGTQPLPPEPPSLGTPIE) is disordered. The Extracellular portion of the chain corresponds to 1 to 233 (MNMPQSLGTQ…ADALTYGFQL (233 aa)). Residue asparagine 100 is glycosylated (N-linked (GlcNAc...) asparagine). An EGF-like domain is found at 182–221 (FLSPCVDDCGPYGQCKLLRTHNYLYAACECKAGWRGWGCT). 3 disulfide bridges follow: cysteine 186/cysteine 196, cysteine 190/cysteine 209, and cysteine 211/cysteine 220. A helical membrane pass occupies residues 234 to 254 (LSTLLLCLSNLMFLPPVVLAI). Over 255–257 (RSR) the chain is Cytoplasmic. Residues 258 to 277 (YVLEAAVYTFTMFFSTFYHA) form a helical membrane-spanning segment. Topologically, residues 278 to 292 (CDQPGIVVFCIMDYD) are extracellular. Residues 293–313 (VLQFCDFLGSLMSVWVTVIAM) form a helical membrane-spanning segment. Residues 314-315 (AR) are Cytoplasmic-facing. The helical transmembrane segment at 316–336 (LQPVIKQVLYLLGAMLLSMAL) threads the bilayer. Over 337-342 (QLDRHG) the chain is Extracellular. Residues 343 to 363 (LWNLLGPSLFALGILATAWTV) form a helical membrane-spanning segment. Residues 364–379 (RSVRRRHCYPPTWRRW) lie on the Cytoplasmic side of the membrane. Residues 380-400 (LFYLCPGSLIAGSAVLLYAFV) form a helical membrane-spanning segment. Residues 401–405 (ETRDN) lie on the Extracellular side of the membrane. A helical membrane pass occupies residues 406 to 426 (YFYIHSIWHMLIAGSVGFLLP). At 427–472 (PRAKTDRRVPSGARARGCGYQLCINEQEELGLVGPGGTTVSSICVS) the chain is on the cytoplasmic side.

Belongs to the TMEM8 family. As to quaternary structure, may interact with EZR. N-glycosylated.

Its subcellular location is the cell membrane. The protein localises to the cytoplasm. The protein resides in the nucleus. It is found in the mitochondrion. It localises to the endoplasmic reticulum. May function as a regulator of the EGFR pathway. Probable tumor suppressor which may function in cell growth, proliferation and adhesion. The protein is Transmembrane protein 8B (Tmem8b) of Mus musculus (Mouse).